The primary structure comprises 49 residues: Large ribosomal subunit protein bL33B (49 aa).

It belongs to the bacterial ribosomal protein bL33 family.

The sequence is that of Large ribosomal subunit protein bL33B from Bacillus cereus (strain ATCC 14579 / DSM 31 / CCUG 7414 / JCM 2152 / NBRC 15305 / NCIMB 9373 / NCTC 2599 / NRRL B-3711).